Here is a 392-residue protein sequence, read N- to C-terminus: Gastricsin (392 aa).

The N-terminal stretch at 1–16 is a signal peptide; it reads MKWMVVALLCLPLLEA. Residues 17-62 constitute a propeptide, activation peptide; sequence ALIRVPLKKMKSIRETMKEQGVLKDFLKNHKYDPGQKYHFGKFGDY. In terms of domain architecture, Peptidase A1 spans 76 to 389; the sequence is YYGEISIGTP…DMGNNRVGLA (314 aa). Residue D94 is part of the active site. Disulfide bonds link C107–C112 and C270–C275. Residue D280 is part of the active site. C314 and C347 are oxidised to a cystine.

This sequence belongs to the peptidase A1 family.

It is found in the secreted. It carries out the reaction More restricted specificity than pepsin A, but shows preferential cleavage at Tyr-|-Xaa bonds. High activity on hemoglobin.. Functionally, hydrolyzes a variety of proteins. The sequence is that of Gastricsin (Pgc) from Mus musculus (Mouse).